Reading from the N-terminus, the 400-residue chain is Snake venom metalloproteinase H3 (400 aa).

Positions 1-6 (FPYQGS) are cleaved as a signal peptide. Positions 7–176 (SIILESGNVN…KKASQLIVST (170 aa)) are excised as a propeptide. The Peptidase M12B domain maps to 180-377 (KYMEIVIVVD…ENPPCILNKP (198 aa)). Ca(2+) contacts are provided by Glu-183 and Asp-267. Cystine bridges form between Cys-291-Cys-372, Cys-331-Cys-356, and Cys-333-Cys-339. His-316 is a binding site for Zn(2+). Glu-317 is an active-site residue. The Zn(2+) site is built by His-320 and His-326. Positions 372, 375, 387, 390, 392, 394, and 400 each coordinate Ca(2+). Positions 378–400 (LRTDTVSTPVSGNELLEAGKDYD) are excised as a propeptide.

Belongs to the venom metalloproteinase (M12B) family. P-I subfamily. As to quaternary structure, monomer. The cofactor is Zn(2+). As to expression, expressed by the venom gland.

It is found in the secreted. Its function is as follows. Snake venom metalloproteinase that impairs hemostasis in the envenomed animal. In Deinagkistrodon acutus (Hundred-pace snake), this protein is Snake venom metalloproteinase H3.